A 462-amino-acid chain; its full sequence is Iroquois-class homeodomain protein irx-1-B (462 aa).

Positions 121-183 (DPGRPKNATR…NARRRLKKEN (63 aa)) form a DNA-binding region, homeobox; TALE-type. Disordered stretches follow at residues 191–302 (GKED…PHSK), 314–339 (SPDG…QHPA), and 405–462 (SLSS…LPSA). 2 stretches are compositionally biased toward acidic residues: residues 210-220 (EDDEEIDLESI) and 228-239 (NDGEQSNEEEDE). The span at 240–257 (KLDHFRHGEKVSLKKESE) shows a compositional bias: basic and acidic residues. Positions 410-426 (RTPERTSPKHSDRENLP) are enriched in basic and acidic residues. The span at 446–455 (FSQQEGTSRI) shows a compositional bias: polar residues.

It belongs to the TALE/IRO homeobox family.

Its subcellular location is the nucleus. Functionally, acts partially redundantly with other irx members in neural patterning. Required for formation of the posterior forebrain, midbrain, hindbrain, and to a lesser extent, spinal cord. Acts early in neural plate development to induce expression of some but not all proneural genes, and specify a neural precursor state. Also up-regulates repressors that prevent neuronal differentiation. Patterns the neuroectoderm in both the anterior/posterior and dorsal/ventral axes. Acts primarily as a transcriptional repressor during neural development, and binds to the bmp4 promoter to repress gene expression and thus mediate down-regulation of bmp4 by wnt signaling. Controls multiple processes through bmp4-repression including neural plate development, neural crest specification and Spemann organizer development. Involved in the specification of the preplacodal field at the anterior border of the neural plate. Regulates the genetic cascade of interactions that are necessary for positioning the isthmus organizer and the formation of the midbrain-hindbrain boundary. Required during at least two stages of pronephros kidney development; during neurula stages, maintains transcription of key renal genes to define the size and identity of the pronephric anlage, probably in part through regulation of bmp-signaling. Subsequently required for proper formation of the intermediate tubule segment of the pronephros. Acts principally as a transcriptional activator during pronephros development. The protein is Iroquois-class homeodomain protein irx-1-B (irx1-b) of Xenopus laevis (African clawed frog).